We begin with the raw amino-acid sequence, 133 residues long: Capsid protein (133 aa).

Belongs to the Leviviricetes capsid protein family. Homodimer. The capsid protein dimer binds to the viral RNA via an operator hairpin, but also many other RNA sequences in the viral genome.

The protein resides in the virion. Its function is as follows. Capsid protein self-assembles to form an icosahedral capsid with a T=3 symmetry, about 26 nm in diameter, and consisting of 89 capsid proteins dimers (178 capsid proteins). Involved in viral genome encapsidation through the interaction between a capsid protein dimer and the multiple packaging signals present in the RNA genome. Binding of the capsid proteins to the viral RNA induces a conformational change required for efficient T=3 shell formation. The capsid also contains 1 copy of the A2 maturation protein. Functionally, acts as a translational repressor of viral replicase synthesis late in infection. This latter function is the result of capsid protein interaction with an RNA hairpin which contains the replicase ribosome-binding site. The protein is Capsid protein of Escherichia coli.